Reading from the N-terminus, the 502-residue chain is Aspartyl/glutamyl-tRNA(Asn/Gln) amidotransferase subunit B (502 aa).

Belongs to the GatB/GatE family. GatB subfamily. As to quaternary structure, heterotrimer of A, B and C subunits.

The catalysed reaction is L-glutamyl-tRNA(Gln) + L-glutamine + ATP + H2O = L-glutaminyl-tRNA(Gln) + L-glutamate + ADP + phosphate + H(+). It carries out the reaction L-aspartyl-tRNA(Asn) + L-glutamine + ATP + H2O = L-asparaginyl-tRNA(Asn) + L-glutamate + ADP + phosphate + 2 H(+). Allows the formation of correctly charged Asn-tRNA(Asn) or Gln-tRNA(Gln) through the transamidation of misacylated Asp-tRNA(Asn) or Glu-tRNA(Gln) in organisms which lack either or both of asparaginyl-tRNA or glutaminyl-tRNA synthetases. The reaction takes place in the presence of glutamine and ATP through an activated phospho-Asp-tRNA(Asn) or phospho-Glu-tRNA(Gln). This is Aspartyl/glutamyl-tRNA(Asn/Gln) amidotransferase subunit B from Ruegeria sp. (strain TM1040) (Silicibacter sp.).